Here is a 415-residue protein sequence, read N- to C-terminus: Corticotropin-releasing factor receptor 1 (415 aa).

The signal sequence occupies residues 1 to 23 (MARHPQLRLVKALLLLGLNPVSA). Residues 24-111 (SLQDQHCESL…CQEILNEEKK (88 aa)) lie on the Extracellular side of the membrane. Cystine bridges form between cysteine 30/cysteine 54, cysteine 44/cysteine 87, and cysteine 68/cysteine 102. Residues asparagine 38, asparagine 78, and asparagine 98 are each glycosylated (N-linked (GlcNAc...) asparagine). Residues 99–108 (YSECQEILNE) are important for peptide agonist binding. The helical transmembrane segment at 112-142 (SKVHYHVAVIINYLGHCISLVALLVAFVLFL) threads the bilayer. Residues 143–149 (RLRSIRC) are Cytoplasmic-facing. A helical membrane pass occupies residues 150 to 174 (LRNIIHWNLISAFILRNATWFVVQL). Residues 175 to 189 (TMSPEVHQSNVGWCR) lie on the Extracellular side of the membrane. Cysteine 188 and cysteine 258 are oxidised to a cystine. Residues 190-218 (LVTAAYNYFHVTNFFWMFGEGCYLHTAIV) form a helical membrane-spanning segment. The Cytoplasmic portion of the chain corresponds to 219 to 225 (LTYSTDR). A helical membrane pass occupies residues 226–253 (LRKWMFICIGWGVPFPIIVAWAIGKLYY). Topologically, residues 254–269 (DNEKCWFGKRPGVYTD) are extracellular. The chain crosses the membrane as a helical span at residues 270-295 (YIYQGPMILVLLINFIFLFNIVRILM). Positions 280-290 (LLINFIFLFNI) are important for antagonist binding. Topologically, residues 296-306 (TKLRASTTSET) are cytoplasmic. Serine 301 carries the post-translational modification Phosphoserine; by PKA. The helical transmembrane segment at 307-331 (IQYRKAVKATLVLLPLLGITYMLFF) threads the bilayer. Topologically, residues 332-338 (VNPGEDE) are extracellular. Residues 339-368 (VSRVVFIYFNSFLESFQGFFVSVFYCFLNS) traverse the membrane as a helical segment. At 369–415 (EVRSAIRKRWHRWQDKHSIRARVARAMSIPTSPTRVSFHSIKQSTAV) the chain is on the cytoplasmic side.

Belongs to the G-protein coupled receptor 2 family. As to quaternary structure, heterodimer; heterodimerizes with GPER1. Interacts (via N-terminal extracellular domain) with CRH and UCN. Interacts with DLG1; this inhibits endocytosis of CRHR1 after agonist binding. Post-translationally, C-terminal Ser or Thr residues may be phosphorylated. In terms of processing, phosphorylation at Ser-301 by PKA prevents maximal coupling to Gq-protein, and thereby negatively regulates downstream signaling. As to expression, expressed abundantly in the pituitary, cerebral cortex, hippocampus, amygdala and cerebellum.

The protein localises to the cell membrane. Its subcellular location is the endosome. G-protein coupled receptor for CRH (corticotropin-releasing factor) and UCN (urocortin). Has high affinity for CRH and UCN. Ligand binding causes a conformation change that triggers signaling via guanine nucleotide-binding proteins (G proteins) and down-stream effectors, such as adenylate cyclase. Promotes the activation of adenylate cyclase, leading to increased intracellular cAMP levels. Inhibits the activity of the calcium channel CACNA1H. Required for normal embryonic development of the adrenal gland and for normal hormonal responses to stress. Plays a role in the response to anxiogenic stimuli. This chain is Corticotropin-releasing factor receptor 1 (CRHR1), found in Macaca mulatta (Rhesus macaque).